A 421-amino-acid chain; its full sequence is Voltage-dependent calcium channel gamma-8 subunit (421 aa).

4 helical membrane-spanning segments follow: residues 19–39, 127–147, 157–177, and 207–227; these read VQVL…TIAI, SSIF…CVAA, IILG…IGVI, and FGGL…NIYI. Phosphoserine is present on residues Ser-251 and Ser-254. The disordered stretch occupies residues 271–304; that stretch reads RRSRSSSRGSSEASPSRDASPGGPGGPGFASTDI. Residues 276–287 are compositionally biased toward low complexity; sequence SSRGSSEASPSR. The chain crosses the membrane as a helical span at residues 318-338; the sequence is VAAGLASAGGGGGGAGVGAYG. 2 disordered regions span residues 342-363 and 378-421; these read GAAG…GFLT and VTVT…TTPV. A compositionally biased stretch (pro residues) spans 384-397; it reads PAAPAPAPPAPAAP. Over residues 408–421 the composition is skewed to polar residues; that stretch reads ASNTNTLNRKTTPV.

It belongs to the PMP-22/EMP/MP20 family. CACNG subfamily. In terms of assembly, interacts with CACNA1C. Identified in a complex with the L-type calcium channel subunits CACNA1C, CACNA2D1 and either CACNB1 or CACNB2. Acts as an auxiliary subunit for AMPA-selective glutamate receptors (AMPARs). Found in a complex with GRIA1, GRIA2, GRIA3, GRIA4, CNIH2, CNIH3, CACNG2, CACNG3, CACNG4, CACNG5 and CACNG7. Interacts with CNIH2. Found in a complex with GRIA1, GRIA2, GRIA3, GRIA4, DLG4 and CNIH2. Post-translationally, palmitoylated. Probably palmitoylated by ZDHHC3 and ZDHHC7.

It localises to the cell membrane. It is found in the postsynaptic density membrane. Regulates the activity of L-type calcium channels that contain CACNA1C as pore-forming subunit. Regulates the trafficking and gating properties of AMPA-selective glutamate receptors (AMPARs). Promotes their targeting to the cell membrane and synapses and modulates their gating properties by slowing their rates of activation, deactivation and desensitization and by mediating their resensitization. Does not show subunit-specific AMPA receptor regulation and regulates all AMPAR subunits. Thought to stabilize the calcium channel in an inactivated (closed) state. This Rattus norvegicus (Rat) protein is Voltage-dependent calcium channel gamma-8 subunit.